The following is a 656-amino-acid chain: Squalene-hopene cyclase (656 aa).

A PFTB 1 repeat occupies 68-110; sequence EQKIANYLRRCQSREHWGWPVYYGGEFNISASVQAYFALKMTG. Catalysis depends on D396, which acts as the Proton donor. PFTB repeat units lie at residues 417 to 459, 485 to 525, 533 to 582, and 591 to 634; these read LDRA…ALLD, IERG…NASG, VLKC…GLMA, and VKRG…QFFP.

Belongs to the terpene cyclase/mutase family.

The catalysed reaction is squalene = hop-22(29)-ene. It carries out the reaction squalene + H2O = hopan-22-ol. Its function is as follows. Squalene cyclase that catalyzes the oxygen-independent cyclization of squalene into hopanoids, a class of cyclic triterpenoids including hop-22(29)-ene, hop-17(21)-ene, hop-21(22)-ene, and hopan-22-ol. The polypeptide is Squalene-hopene cyclase (Schizosaccharomyces japonicus (strain yFS275 / FY16936) (Fission yeast)).